A 199-amino-acid chain; its full sequence is Peptidyl-tRNA hydrolase (199 aa).

Tyr15 contributes to the tRNA binding site. Catalysis depends on His20, which acts as the Proton acceptor. TRNA-binding residues include Tyr66, Asn68, and Asn114.

Belongs to the PTH family. Monomer.

It is found in the cytoplasm. The catalysed reaction is an N-acyl-L-alpha-aminoacyl-tRNA + H2O = an N-acyl-L-amino acid + a tRNA + H(+). Its function is as follows. Hydrolyzes ribosome-free peptidyl-tRNAs (with 1 or more amino acids incorporated), which drop off the ribosome during protein synthesis, or as a result of ribosome stalling. Functionally, catalyzes the release of premature peptidyl moieties from peptidyl-tRNA molecules trapped in stalled 50S ribosomal subunits, and thus maintains levels of free tRNAs and 50S ribosomes. The protein is Peptidyl-tRNA hydrolase of Burkholderia cenocepacia (strain HI2424).